We begin with the raw amino-acid sequence, 350 residues long: UDP-3-O-acylglucosamine N-acyltransferase (350 aa).

The active-site Proton acceptor is His257.

Belongs to the transferase hexapeptide repeat family. LpxD subfamily. As to quaternary structure, homotrimer.

The enzyme catalyses a UDP-3-O-[(3R)-3-hydroxyacyl]-alpha-D-glucosamine + a (3R)-hydroxyacyl-[ACP] = a UDP-2-N,3-O-bis[(3R)-3-hydroxyacyl]-alpha-D-glucosamine + holo-[ACP] + H(+). It functions in the pathway bacterial outer membrane biogenesis; LPS lipid A biosynthesis. Catalyzes the N-acylation of UDP-3-O-acylglucosamine using 3-hydroxyacyl-ACP as the acyl donor. Is involved in the biosynthesis of lipid A, a phosphorylated glycolipid that anchors the lipopolysaccharide to the outer membrane of the cell. The polypeptide is UDP-3-O-acylglucosamine N-acyltransferase (Chelativorans sp. (strain BNC1)).